The primary structure comprises 162 residues: MKLRILSVGSKMPKWIDTGFNEYHKRIQPMLTTEMVDLAAAKRAKNPSEANLAQYREQEGKAILATHQSNSREKLWVLDVKGKMLSTEQLADKLSEAMQVGDDVALVIGGADGVSPEVLAAADFKWSLSPLTLPHPLVRVVLMEQLYRAMSINNNHPYHRGN.

Residues Leu78, Gly109, and 128-133 (LSPLTL) each bind S-adenosyl-L-methionine.

The protein belongs to the RNA methyltransferase RlmH family. As to quaternary structure, homodimer.

It is found in the cytoplasm. The enzyme catalyses pseudouridine(1915) in 23S rRNA + S-adenosyl-L-methionine = N(3)-methylpseudouridine(1915) in 23S rRNA + S-adenosyl-L-homocysteine + H(+). In terms of biological role, specifically methylates the pseudouridine at position 1915 (m3Psi1915) in 23S rRNA. The protein is Ribosomal RNA large subunit methyltransferase H of Psychrobacter sp. (strain PRwf-1).